A 538-amino-acid chain; its full sequence is MGLLLLVLILTPLLAAHRHPDFPLLEKAQQLLQSTGSPYSTNCWLCTSSSTETPGTAYPASPREWTSIEAELHISYHWDPNLKGLMRPANSLLSTVKQDFPDIRQKPPIFGPIFTNINLMGIAPICVTAKRKNGTNVGTLPSTVCNVTFTVDPNQQTYQTYTHKQFLHQPRFPKPPNITFPQGTLLDKSTRFCQGRPSSCSTRNFWFRPADYNQCLQISNLSSTAEWVLLDQTRNSLFWENKTKGANQSQTPCVQVLAGMTIATSYLGISAVSEFFGTSLTPLFHFHISTCLKTQGAFYICGQSIHQCLPSNWTGTCTIGYVTPDIFIAPGNISLPIPIYGNSQLPRVRRAIHFIPLLAGLGIIAGTGTGIAGITKASLTYSQLSKEIAKNIDTMAKALTTVQEQIDSLAAVVLQNRRGLDMLTAAQGGICLALDEKCCFWVNQSGKVQDNIRQLLNQASSLRERATQGWLNWEGTWKWFSWVLPFTGPLVSLLLLLLFGPCLLNLITQFVLSRLQAIKLQTNLSAGCRPHNIQESPF.

Positions 1 to 15 (MGLLLLVLILTPLLA) are cleaved as a signal peptide. Residues 16–478 (AHRHPDFPLL…GWLNWEGTWK (463 aa)) are Extracellular-facing. Residues 43-46 (CWLC) carry the CXXC motif. Disulfide bonds link Cys43-Cys46, Cys43-Cys439, and Cys431-Cys438. N-linked (GlcNAc...) asparagine glycosylation is found at Asn133, Asn146, Asn177, Asn220, Asn241, Asn247, Asn312, and Asn332. Residues 354-374 (FIPLLAGLGIIAGTGTGIAGI) are fusion peptide. Positions 414–430 (LQNRRGLDMLTAAQGGI) match the CKS-17 motif. The CX6CC signature appears at 431 to 439 (CLALDEKCC). An N-linked (GlcNAc...) asparagine glycan is attached at Asn443. A helical membrane pass occupies residues 479-499 (WFSWVLPFTGPLVSLLLLLLF). Residues 500-538 (GPCLLNLITQFVLSRLQAIKLQTNLSAGCRPHNIQESPF) are Cytoplasmic-facing.

Belongs to the gamma type-C retroviral envelope protein family. HERV class-I FRD env subfamily. As to quaternary structure, the surface and transmembrane proteins form a heterodimer. They are attached by non-covalent interactions or by a labile interchain disulfide bond. Specific enzymatic cleavages in vivo yield the mature SU and TM proteins. In terms of processing, the CXXC motif is highly conserved across a broad range of retroviral envelope proteins. It is thought to participate in the formation of a labile disulfide bond possibly with the CX6CC motif present in the transmembrane protein.

It localises to the virion. Its subcellular location is the cell membrane. In terms of biological role, this endogenous retroviral envelope protein has retained its original fusogenic properties and participates in trophoblast fusion and the formation of a syncytium during placenta morphogenesis. The interaction with MFSD2A is apparently important for this process. Functionally, endogenous envelope proteins may have kept, lost or modified their original function during evolution but this one can still make pseudotypes with MLV, HIV-1 or SIV-1 virions and confer infectivity. Retroviral envelope proteins mediate receptor recognition and membrane fusion during early infection. The surface protein mediates receptor recognition, while the transmembrane protein anchors the envelope heterodimer to the viral membrane through one transmembrane domain. The other hydrophobic domain, called fusion peptide, mediates fusion of the viral membrane with the target cell membrane. This chain is Syncytin-2 (ERVFRD-1), found in Pongo pygmaeus (Bornean orangutan).